Reading from the N-terminus, the 1038-residue chain is Kinesin-like protein KIN-5B (1038 aa).

The interval 1–63 is disordered; it reads MAQTPNPSRR…GGGGGGGSEM (63 aa). Over residues 24–34 the composition is skewed to basic and acidic residues; it reads RPERRQLELRW. Residues 49-61 are compositionally biased toward gly residues; it reads GLTGGGGGGGGGS. Residues 69–410 enclose the Kinesin motor domain; the sequence is NVQVVLRCRP…LDYAYRAKSI (342 aa). Residue 154-161 coordinates ATP; it reads GQTGTGKT. Positions 453–502 form a coiled coil; that stretch reads QERFALEEAEKKTMRDKIEYLETQNKELKMNIESCKKEYLDLEEAHSRAN. The disordered stretch occupies residues 1013–1038; sequence DKGKRYVDQGTRTPRSPLMPVNHYNK.

This sequence belongs to the TRAFAC class myosin-kinesin ATPase superfamily. Kinesin family. KIN-5/BimC subfamily.

The protein localises to the cytoplasm. It is found in the cytoskeleton. The protein resides in the spindle. Its function is as follows. Responsible for microtubule translocation. May be important for the organization of phragmoplast-specific arrays of microtubules. Plays an essential role in stabilizing the mitotic spindle. Required during mitotic cytokinesis. The chain is Kinesin-like protein KIN-5B from Oryza sativa subsp. japonica (Rice).